The primary structure comprises 484 residues: Protein nucleotidyltransferase YdiU (484 aa).

The ATP site is built by Gly-81, Gly-83, Arg-84, Lys-103, Asp-115, Gly-116, Arg-166, and Arg-173. Asp-244 serves as the catalytic Proton acceptor. Mg(2+) is bound by residues Asn-245 and Asp-254. Residue Asp-254 coordinates ATP.

It belongs to the SELO family. Requires Mg(2+) as cofactor. Mn(2+) serves as cofactor.

The catalysed reaction is L-seryl-[protein] + ATP = 3-O-(5'-adenylyl)-L-seryl-[protein] + diphosphate. The enzyme catalyses L-threonyl-[protein] + ATP = 3-O-(5'-adenylyl)-L-threonyl-[protein] + diphosphate. It carries out the reaction L-tyrosyl-[protein] + ATP = O-(5'-adenylyl)-L-tyrosyl-[protein] + diphosphate. It catalyses the reaction L-histidyl-[protein] + UTP = N(tele)-(5'-uridylyl)-L-histidyl-[protein] + diphosphate. The catalysed reaction is L-seryl-[protein] + UTP = O-(5'-uridylyl)-L-seryl-[protein] + diphosphate. The enzyme catalyses L-tyrosyl-[protein] + UTP = O-(5'-uridylyl)-L-tyrosyl-[protein] + diphosphate. In terms of biological role, nucleotidyltransferase involved in the post-translational modification of proteins. It can catalyze the addition of adenosine monophosphate (AMP) or uridine monophosphate (UMP) to a protein, resulting in modifications known as AMPylation and UMPylation. This is Protein nucleotidyltransferase YdiU from Shewanella baltica (strain OS195).